Consider the following 472-residue polypeptide: MSKGKITQIIGAVVDVKFDGELPEILSALECKNGDNRLVLEVAQHLGESSVRTIAMDATEGLKRGDEVTATGAPIQVPVGPETLGRIINVIGEPIDEKGEVKTKEKWPIHRAAPEFSDQSTETEILVTGIKVVDLLAPYAKGGKIGLFGGAGVGKTVLIMELINNVAKAHGGFSVFAGVGERTREGNDLYHEMIDSGVIKPEGPGSKAALVYGQMNEPPGARARVALTGLTVAEYFRDQEGQDVLFFVDNIFRFTQAGSEVSALLGRIPSAVGYQPTLATDMGNLQERITTTNKGSITSVQAIYVPADDLTDPAPATSFAHLDATTVLSRQIAEIGIYPAVDPLDSTSRILDPRIVGDEHYRVAREVQKILQTYKSLQDIIAILGMDELSEEDKLTVARARKIQRFLSQPFFVAEVFTGSPGKLVDLESTIKGFAAICNGEYDHLPEAAFYMVGTIEEAVEKAEKMAKDAAA.

149–156 (GGAGVGKT) is an ATP binding site.

This sequence belongs to the ATPase alpha/beta chains family. F-type ATPases have 2 components, CF(1) - the catalytic core - and CF(0) - the membrane proton channel. CF(1) has five subunits: alpha(3), beta(3), gamma(1), delta(1), epsilon(1). CF(0) has three main subunits: a(1), b(2) and c(9-12). The alpha and beta chains form an alternating ring which encloses part of the gamma chain. CF(1) is attached to CF(0) by a central stalk formed by the gamma and epsilon chains, while a peripheral stalk is formed by the delta and b chains.

It is found in the cell inner membrane. It catalyses the reaction ATP + H2O + 4 H(+)(in) = ADP + phosphate + 5 H(+)(out). Produces ATP from ADP in the presence of a proton gradient across the membrane. The catalytic sites are hosted primarily by the beta subunits. The sequence is that of ATP synthase subunit beta from Pelagibacter ubique (strain HTCC1062).